A 104-amino-acid chain; its full sequence is MCSRGGSNSRPSDYETDALPTELLKHTKDVGEEKQTLHQIFADSMVIKGYSTGYTGHTRSSPGDLVIHKRELIFSHNIVIIVSPIYMISFIILLHYQSWHFSIY.

The helical transmembrane segment at 72 to 92 threads the bilayer; sequence LIFSHNIVIIVSPIYMISFII.

The protein resides in the membrane. This is an uncharacterized protein from Saccharomyces cerevisiae (strain ATCC 204508 / S288c) (Baker's yeast).